The following is a 205-amino-acid chain: High frequency lysogenization protein HflD homolog (205 aa).

This sequence belongs to the HflD family.

It localises to the cytoplasm. Its subcellular location is the cell inner membrane. The polypeptide is High frequency lysogenization protein HflD homolog (Shewanella sp. (strain ANA-3)).